The sequence spans 566 residues: uncharacterized protein (566 aa).

This is an uncharacterized protein from Escherichia coli (strain K12).